The chain runs to 121 residues: Small ribosomal subunit protein uS13 (121 aa).

The interval 91 to 121 (HRMSLPVRGQRTRTNARTRRGSRKTVAGRKK) is disordered. The segment covering 100 to 121 (QRTRTNARTRRGSRKTVAGRKK) has biased composition (basic residues).

It belongs to the universal ribosomal protein uS13 family. In terms of assembly, part of the 30S ribosomal subunit. Forms a loose heterodimer with protein S19. Forms two bridges to the 50S subunit in the 70S ribosome.

In terms of biological role, located at the top of the head of the 30S subunit, it contacts several helices of the 16S rRNA. In the 70S ribosome it contacts the 23S rRNA (bridge B1a) and protein L5 of the 50S subunit (bridge B1b), connecting the 2 subunits; these bridges are implicated in subunit movement. Contacts the tRNAs in the A and P-sites. This chain is Small ribosomal subunit protein uS13, found in Prochlorococcus marinus (strain SARG / CCMP1375 / SS120).